We begin with the raw amino-acid sequence, 499 residues long: 2-isopropylmalate synthase (499 aa).

Residues 5–267 (IKIFDTTLRD…ETGINLGEIA (263 aa)) form the Pyruvate carboxyltransferase domain. Positions 14, 202, 204, and 238 each coordinate Mn(2+). The interval 391 to 499 (SVEVLHVISG…YLSALNRIRR (109 aa)) is regulatory domain.

This sequence belongs to the alpha-IPM synthase/homocitrate synthase family. LeuA type 1 subfamily. It depends on Mn(2+) as a cofactor.

It localises to the cytoplasm. The enzyme catalyses 3-methyl-2-oxobutanoate + acetyl-CoA + H2O = (2S)-2-isopropylmalate + CoA + H(+). The protein operates within amino-acid biosynthesis; L-leucine biosynthesis; L-leucine from 3-methyl-2-oxobutanoate: step 1/4. Its function is as follows. Catalyzes the condensation of the acetyl group of acetyl-CoA with 3-methyl-2-oxobutanoate (2-ketoisovalerate) to form 3-carboxy-3-hydroxy-4-methylpentanoate (2-isopropylmalate). This chain is 2-isopropylmalate synthase, found in Pyrococcus furiosus (strain ATCC 43587 / DSM 3638 / JCM 8422 / Vc1).